The chain runs to 611 residues: Threonine--tRNA ligase (611 aa).

Residues 1–25 form a disordered region; the sequence is MAGPDRKPVSSAAATTPAPSAPVVL. Low complexity predominate over residues 9 to 24; it reads VSSAAATTPAPSAPVV. The tract at residues 209 to 502 is catalytic; it reads DHRRIGKDLD…MTENYAGDYP (294 aa). Residues C302, H353, and H479 each coordinate Zn(2+).

This sequence belongs to the class-II aminoacyl-tRNA synthetase family. Homodimer. It depends on Zn(2+) as a cofactor.

The protein localises to the cytoplasm. The enzyme catalyses tRNA(Thr) + L-threonine + ATP = L-threonyl-tRNA(Thr) + AMP + diphosphate + H(+). In terms of biological role, catalyzes the attachment of threonine to tRNA(Thr) in a two-step reaction: L-threonine is first activated by ATP to form Thr-AMP and then transferred to the acceptor end of tRNA(Thr). Also edits incorrectly charged L-seryl-tRNA(Thr). The polypeptide is Threonine--tRNA ligase (Parasynechococcus marenigrum (strain WH8102)).